The primary structure comprises 527 residues: Baicalin-beta-D-glucuronidase (527 aa).

The signal sequence occupies residues 1–25; it reads MGFQVWQKGLCVLCFSLIFICGVIG. E212 acts as the Proton donor in catalysis. The active-site Nucleophile is the E329.

Belongs to the glycosyl hydrolase 79 family. Homotetramer.

The catalysed reaction is baicalin + H2O = baicalein + D-glucuronate + H(+). In terms of biological role, beta-glucuronidase involved in the initiation of H(2)O(2) metabolism via the production of baicalein. Unable to use glycyrrhizin, gypsogenin-3-O-D-glucuronide, luteolin-7-O-D-glucoside and apigenin-7-O-D-glucoside as substrates. The protein is Baicalin-beta-D-glucuronidase (SGUS) of Scutellaria baicalensis (Baical skullcap).